The sequence spans 135 residues: Snaclec echicetin subunit alpha (135 aa).

A signal peptide spans 1 to 4; that stretch reads GADE. Disulfide bonds link cysteine 6–cysteine 17, cysteine 34–cysteine 129, and cysteine 104–cysteine 121. In terms of domain architecture, C-type lectin spans 13–130; that stretch reads NGVYCYMLFK…CENTFPFMCK (118 aa).

It belongs to the snaclec family. As to quaternary structure, heterodimer of subunits alpha and beta; disulfide-linked. Expressed by the venom gland.

It localises to the secreted. In terms of biological role, binding of echicetin to GPIbalpha (GP1BA) receptor on platelets alone results in inhibition of platelet aggregation, while binding to both GP1BA receptor and IgMk promotes platelet aggregation and signal transduction. The protein is Snaclec echicetin subunit alpha of Echis carinatus (Saw-scaled viper).